A 56-amino-acid chain; its full sequence is Large ribosomal subunit protein bL32 (56 aa).

The span at 1-16 (MAVQKSKKSRSRRDMR) shows a compositional bias: basic residues. The segment at 1 to 56 (MAVQKSKKSRSRRDMRRSHDAIDGPTLSVDSTTGETHRRHHVTADGYYKGRKVVNK) is disordered.

This sequence belongs to the bacterial ribosomal protein bL32 family.

The chain is Large ribosomal subunit protein bL32 from Idiomarina loihiensis (strain ATCC BAA-735 / DSM 15497 / L2-TR).